The sequence spans 176 residues: Peroxynitrite isomerase 1 (176 aa).

A disordered region spans residues 1 to 23 (MDENSTLSPAHSDAAASSSANTP). Over residues 8–20 (SPAHSDAAASSSA) the composition is skewed to low complexity. Residues 37-43 (GLWRGEG) carry the GXWXGXG motif. His168 provides a ligand contact to heme b.

It belongs to the nitrobindin family. As to quaternary structure, homodimer. It depends on heme b as a cofactor.

It carries out the reaction peroxynitrite = nitrate. The protein operates within nitrogen metabolism. Heme-binding protein able to scavenge peroxynitrite and to protect free L-tyrosine against peroxynitrite-mediated nitration, by acting as a peroxynitrite isomerase that converts peroxynitrite to nitrate. Therefore, this protein likely plays a role in peroxynitrite sensing and in the detoxification of reactive nitrogen and oxygen species (RNS and ROS, respectively). Is able to bind nitric oxide (NO) in vitro, but may act as a sensor of peroxynitrite levels in vivo. The polypeptide is Peroxynitrite isomerase 1 (Rhodococcus jostii (strain RHA1)).